The following is a 633-amino-acid chain: MNSGSRIELLSPRLANQIAAGEVVERPASVIKELLENSIDSGAKRIDVDVEQGGVKLLRVRDDGSGISSDDLPLALARHATSKIRDLEDLERVMSLGFRGEALASISSVARLTLTSRTRDADQAWQVETEGRDMAPRVQPAAHPVGTSVEVRDLFFNTPARRKFLKAEKTEFDHLQEVIKRLALARFDVAFHLRHNGKTILSLHEAHDDAARARRVSAICGAGFLEQALPIEIERNGLRLWGWVGLPTFSRSQADLQYFFVNGRAVRDKLVAHAVRQAYRDVLFNGRHPTFVLFFEVDPSVVDVNVHPTKHEVRFRDGRMVHDFLYGTLHRTLGDVRPDDQLSAPIVTAVVRPSGPEAGEFGPQGEMSLAANLLQSPQPQPSYTAPGSGSGAGYQYQYTPRPQSAVPVAEAQAAYREFFAPLPGAEPGAPVALPEGGGDIPPLGYALAQLKGIYILAENAHGLVLVDMHAAHERIMYERLKIAMASEGLSGQPLLVPESLAVSQREADCAEEHHSVFQKLGFELQRLGPETLAIRQIPALLKQAEANRLVADVLADLMEYGTSDRIQAHINELLGTMACHGAIRANRRLALPEMNGLLRDMENTERSGQCNHGRPTWTQMGLDDLDKLFLRGR.

Belongs to the DNA mismatch repair MutL/HexB family.

In terms of biological role, this protein is involved in the repair of mismatches in DNA. It is required for dam-dependent methyl-directed DNA mismatch repair. May act as a 'molecular matchmaker', a protein that promotes the formation of a stable complex between two or more DNA-binding proteins in an ATP-dependent manner without itself being part of a final effector complex. The sequence is that of DNA mismatch repair protein MutL from Pseudomonas fluorescens (strain SBW25).